Reading from the N-terminus, the 505-residue chain is Trans-cinnamate 4-monooxygenase (505 aa).

A helical transmembrane segment spans residues 3–23 (LLLLEKTLLGLFAAIIVASIV). Residues 213 to 218 (RSRLAQ) and Ala-306 each bind (E)-cinnamate. A heme-binding site is contributed by Cys-447.

The protein belongs to the cytochrome P450 family. Heme is required as a cofactor.

It localises to the membrane. It carries out the reaction (E)-cinnamate + reduced [NADPH--hemoprotein reductase] + O2 = (E)-4-coumarate + oxidized [NADPH--hemoprotein reductase] + H2O + H(+). The protein operates within phenylpropanoid metabolism; trans-4-coumarate biosynthesis; trans-4-coumarate from trans-cinnamate: step 1/1. Catalyzes the first oxidative step of the phenylpropanoid pathway in higher plants by transforming trans-cinnamate into p-coumarate. The compounds formed by this pathway are essential components for lignification, pollination, and defense against ultraviolet light, predators and pathogens. The protein is Trans-cinnamate 4-monooxygenase (CYP73A4) of Catharanthus roseus (Madagascar periwinkle).